We begin with the raw amino-acid sequence, 504 residues long: Malonyl-CoA decarboxylase, mitochondrial (504 aa).

A mitochondrion-targeting transit peptide spans Met1 to Ser50. Positions Met51–Phe201 are alpha-helical domain. The segment at Ser202–Leu504 is catalytic domain. Ser340 acts as the Proton acceptor in catalysis. The Proton donor role is filled by His434. The Microbody targeting signal signature appears at Ser502 to Leu504.

The protein resides in the mitochondrion. It is found in the cytoplasm. It localises to the peroxisome. It carries out the reaction malonyl-CoA + H(+) = acetyl-CoA + CO2. It functions in the pathway metabolic intermediate biosynthesis; acetyl-CoA biosynthesis; acetyl-CoA from malonyl-CoA: step 1/1. Catalyzes the conversion of malonyl-CoA to acetyl-CoA. In the fatty acid biosynthesis MCD selectively removes malonyl-CoA and thus assures that methyl-malonyl-CoA is the only chain elongating substrate for fatty acid synthase and that fatty acids with multiple methyl side chains are produced. The sequence is that of Malonyl-CoA decarboxylase, mitochondrial (MLYCD) from Anser anser anser (Western greylag goose).